Reading from the N-terminus, the 185-residue chain is Photosystem I assembly protein Ycf4 (185 aa).

2 helical membrane passes run 21 to 43 (NFCWAFLLFLGSLGFVLVGTSSY) and 63 to 85 (GLVMSFYGIAGLFISCYLWCTIL).

Belongs to the Ycf4 family.

Its subcellular location is the plastid. It localises to the chloroplast thylakoid membrane. Seems to be required for the assembly of the photosystem I complex. The protein is Photosystem I assembly protein Ycf4 of Brassica oleracea (Wild cabbage).